Reading from the N-terminus, the 386-residue chain is Cytochrome b (386 aa).

4 helical membrane-spanning segments follow: residues 32-52, 76-98, 113-133, and 179-199; these read FGSLLALCLGIQIVTGVTLAM, WMIRYLHANTASFFFLFVYLHIG, PWSIGVIILILMMATAFLGYV, and FFSLHYLLPFILAALAVMHLL. 2 residues coordinate heme b: histidine 82 and histidine 96. Residues histidine 183 and histidine 197 each contribute to the heme b site. Histidine 202 provides a ligand contact to a ubiquinone. 4 helical membrane passes run 225 to 245, 289 to 309, 321 to 341, and 348 to 368; these read YTFKDLVTIFLFFLVLALFLF, LGGVIAMFGSLLILLAMPLLD, LMKFFFWLLVVDFLILLWCGS, and FITLGQFATTFYFSWFLIIVP.

It belongs to the cytochrome b family. In terms of assembly, fungal cytochrome b-c1 complex contains 10 subunits; 3 respiratory subunits, 2 core proteins and 5 low-molecular weight proteins. Cytochrome b-c1 complex is a homodimer. Requires heme b as cofactor.

It is found in the mitochondrion inner membrane. In terms of biological role, component of the ubiquinol-cytochrome c reductase complex (complex III or cytochrome b-c1 complex) that is part of the mitochondrial respiratory chain. The b-c1 complex mediates electron transfer from ubiquinol to cytochrome c. Contributes to the generation of a proton gradient across the mitochondrial membrane that is then used for ATP synthesis. The chain is Cytochrome b (cob) from Rhizopus oryzae (Mucormycosis agent).